The chain runs to 591 residues: L-fucose isomerase (591 aa).

Residues Glu-337 and Asp-361 each act as proton acceptor in the active site. Residues Glu-337, Asp-361, and His-528 each contribute to the Mn(2+) site.

It belongs to the L-fucose isomerase family. Homohexamer. Requires Mn(2+) as cofactor.

It localises to the cytoplasm. The enzyme catalyses L-fucose = L-fuculose. It functions in the pathway carbohydrate degradation; L-fucose degradation; L-lactaldehyde and glycerone phosphate from L-fucose: step 1/3. Functionally, converts the aldose L-fucose into the corresponding ketose L-fuculose. The polypeptide is L-fucose isomerase (Escherichia coli (strain SMS-3-5 / SECEC)).